We begin with the raw amino-acid sequence, 229 residues long: Transmembrane protein 182 (229 aa).

The first 26 residues, 1-26 (MRLNVAVFFGALFGALGVLLFLVAFG), serve as a signal peptide directing secretion. Over 27 to 114 (SDYWLLATEV…SYDSAIIYRG (88 aa)) the chain is Extracellular. Asparagine 47 carries an N-linked (GlcNAc...) asparagine glycan. Residues 49–59 (TFHHEGFFWRC) are interaction with ITGB1. Residues asparagine 68, asparagine 85, and asparagine 102 are each glycosylated (N-linked (GlcNAc...) asparagine). The chain crosses the membrane as a helical span at residues 115 to 135 (FWAVLLLLGVVAALTASFLII). Over 136–153 (CAAPFSSHFLYKAGGGSY) the chain is Cytoplasmic. The chain crosses the membrane as a helical span at residues 154 to 174 (IASGVLFSLVVILYVIWVQAV). Topologically, residues 175–200 (ADMESYRALRMRDCWEFTPSILYGWS) are extracellular. The helical transmembrane segment at 201–221 (FFLAPAGVFFSLLAGLLFLVV) threads the bilayer. Residues 222–229 (GRHIQIHH) are Cytoplasmic-facing.

It belongs to the TMEM182 family. As to quaternary structure, interacts with ITGB1. In terms of tissue distribution, highly expressed in white adipose tissues (WAT), with 10-fold to 20-fold higher levels than in brown adipose tissue (BAT). Also expressed in skeletal muscle, heart and lung. Lower relative levels of expression in kidney, spleen, testis, brain and liver.

Its subcellular location is the cell membrane. Negatively regulates myogenesis and skeletal muscle regeneration via its association with ITGB1. Modulates ITGB1 activation by decreasing ITGB1-LAMB1 interaction and inhibiting ITGB1-mediated intracellular signaling during myogenesis. The chain is Transmembrane protein 182 (Tmem182) from Mus musculus (Mouse).